The following is a 120-amino-acid chain: Thiosulfate sulfurtransferase 16, chloroplastic (120 aa).

In terms of domain architecture, Rhodanese spans 20-120 (LLAGHRYLDV…WAKNGLPTKA (101 aa)). The active-site Cysteine persulfide intermediate is the Cys-80. A substrate-binding site is contributed by Arg-85.

Monomer.

The protein resides in the plastid. It is found in the chloroplast. The enzyme catalyses thiosulfate + hydrogen cyanide = thiocyanate + sulfite + 2 H(+). In terms of biological role, thought to act during the early stages of leaf senescence. Catalyzes the transfer of a sulfur ion from a donor to cyanide or to other thiol compounds. Substrate preference is thiosulfate &gt; 3-mercaptopyruvate. This Arabidopsis thaliana (Mouse-ear cress) protein is Thiosulfate sulfurtransferase 16, chloroplastic (STR16).